Reading from the N-terminus, the 1252-residue chain is DNA-directed RNA polymerase subunit beta (1252 aa).

Belongs to the RNA polymerase beta chain family. In terms of assembly, the RNAP catalytic core consists of 2 alpha, 1 beta, 1 beta' and 1 omega subunit. When a sigma factor is associated with the core the holoenzyme is formed, which can initiate transcription.

The catalysed reaction is RNA(n) + a ribonucleoside 5'-triphosphate = RNA(n+1) + diphosphate. In terms of biological role, DNA-dependent RNA polymerase catalyzes the transcription of DNA into RNA using the four ribonucleoside triphosphates as substrates. This chain is DNA-directed RNA polymerase subunit beta, found in Chlamydia trachomatis serovar D (strain ATCC VR-885 / DSM 19411 / UW-3/Cx).